Here is a 513-residue protein sequence, read N- to C-terminus: Xylose import ATP-binding protein XylG (513 aa).

ABC transporter domains are found at residues 5 to 242 (LEMK…VGRE) and 259 to 505 (LRIE…LRSE). An ATP-binding site is contributed by 37–44 (GENGSGKS).

The protein belongs to the ABC transporter superfamily. Xylose importer (TC 3.A.1.2.4) family. The complex is composed of two ATP-binding proteins (XylG), two transmembrane proteins (XylH) and a solute-binding protein (XylF).

It localises to the cell inner membrane. It carries out the reaction D-xylose(out) + ATP + H2O = D-xylose(in) + ADP + phosphate + H(+). In terms of biological role, part of the ABC transporter complex XylFGH involved in xylose import. Responsible for energy coupling to the transport system. This Escherichia coli O6:K15:H31 (strain 536 / UPEC) protein is Xylose import ATP-binding protein XylG.